The following is a 318-amino-acid chain: L-lactate dehydrogenase (318 aa).

NAD(+)-binding positions include V18, D39, K44, Y69, and 83 to 84 (GA). The substrate site is built by Q86 and R92. NAD(+)-binding positions include S105, 122-124 (VSN), and S147. A substrate-binding site is contributed by 124–127 (NPVD). A substrate-binding site is contributed by 152-155 (DTSR). H179 serves as the catalytic Proton acceptor. Y225 bears the Phosphotyrosine mark. T234 provides a ligand contact to substrate.

This sequence belongs to the LDH/MDH superfamily. LDH family. Homotetramer.

Its subcellular location is the cytoplasm. The enzyme catalyses (S)-lactate + NAD(+) = pyruvate + NADH + H(+). It participates in fermentation; pyruvate fermentation to lactate; (S)-lactate from pyruvate: step 1/1. Catalyzes the conversion of lactate to pyruvate. This Clostridium botulinum (strain Loch Maree / Type A3) protein is L-lactate dehydrogenase.